Here is a 207-residue protein sequence, read N- to C-terminus: Venom allergen 5 (207 aa).

4 disulfides stabilise this stretch: Cys-4/Cys-16, Cys-8/Cys-105, Cys-29/Cys-97, and Cys-173/Cys-190. Residues 48–192 (VDEHNRFRQK…MKSHYLVCNY (145 aa)) enclose the SCP domain.

Belongs to the CRISP family. Venom allergen 5-like subfamily. In terms of assembly, monomer. In terms of tissue distribution, expressed by the venom gland.

It is found in the secreted. The polypeptide is Venom allergen 5 (Polybia scutellaris rioplatensis (Camoati)).